The following is a 294-amino-acid chain: NAD kinase (294 aa).

Aspartate 74 functions as the Proton acceptor in the catalytic mechanism. NAD(+) is bound by residues aspartate 74–glycine 75, asparagine 148–glutamate 149, histidine 159, arginine 176, aspartate 178, threonine 189–serine 194, and glutamine 249.

Belongs to the NAD kinase family. It depends on a divalent metal cation as a cofactor.

The protein localises to the cytoplasm. It carries out the reaction NAD(+) + ATP = ADP + NADP(+) + H(+). Functionally, involved in the regulation of the intracellular balance of NAD and NADP, and is a key enzyme in the biosynthesis of NADP. Catalyzes specifically the phosphorylation on 2'-hydroxyl of the adenosine moiety of NAD to yield NADP. This is NAD kinase from Vibrio vulnificus (strain YJ016).